The following is a 476-amino-acid chain: Serine/threonine-protein kinase PknF (476 aa).

A phosphothreonine; by autocatalysis mark is found at T8 and T13. Positions 12 to 279 (FTIVRQLGSG…FARALGHRLG (268 aa)) constitute a Protein kinase domain. ATP is bound by residues 18 to 26 (LGSGGMGEV) and K41. The active-site Proton acceptor is the D137. T173, T175, and T287 each carry phosphothreonine; by autocatalysis. At S290 the chain carries Phosphoserine; by autocatalysis. The segment at 332–376 (ADDERAAQPARTRTTTSAGTTTSVAPASTTRPAPTTPTTTGAADT) is disordered. The span at 338–376 (AQPARTRTTTSAGTTTSVAPASTTRPAPTTPTTTGAADT) shows a compositional bias: low complexity.

The protein belongs to the protein kinase superfamily. Ser/Thr protein kinase family. Dephosphorylated by PstP.

The catalysed reaction is L-seryl-[protein] + ATP = O-phospho-L-seryl-[protein] + ADP + H(+). It carries out the reaction L-threonyl-[protein] + ATP = O-phospho-L-threonyl-[protein] + ADP + H(+). This Mycobacterium bovis (strain ATCC BAA-935 / AF2122/97) protein is Serine/threonine-protein kinase PknF (pknF).